Here is a 183-residue protein sequence, read N- to C-terminus: Large ribosomal subunit protein uL6 (183 aa).

This sequence belongs to the universal ribosomal protein uL6 family. Part of the 50S ribosomal subunit.

Functionally, this protein binds to the 23S rRNA, and is important in its secondary structure. It is located near the subunit interface in the base of the L7/L12 stalk, and near the tRNA binding site of the peptidyltransferase center. This Parabacteroides distasonis (strain ATCC 8503 / DSM 20701 / CIP 104284 / JCM 5825 / NCTC 11152) protein is Large ribosomal subunit protein uL6.